A 284-amino-acid chain; its full sequence is 4-hydroxy-3-methylbut-2-enyl diphosphate reductase (284 aa).

A [4Fe-4S] cluster-binding site is contributed by Cys12. 2 residues coordinate (2E)-4-hydroxy-3-methylbut-2-enyl diphosphate: His40 and His72. Dimethylallyl diphosphate contacts are provided by His40 and His72. Residues His40 and His72 each contribute to the isopentenyl diphosphate site. [4Fe-4S] cluster is bound at residue Cys94. His122 lines the (2E)-4-hydroxy-3-methylbut-2-enyl diphosphate pocket. Residue His122 coordinates dimethylallyl diphosphate. His122 contributes to the isopentenyl diphosphate binding site. Glu124 (proton donor) is an active-site residue. (2E)-4-hydroxy-3-methylbut-2-enyl diphosphate is bound at residue Thr161. Cys193 is a [4Fe-4S] cluster binding site. (2E)-4-hydroxy-3-methylbut-2-enyl diphosphate contacts are provided by Ser221, Asn223, and Ser264. 3 residues coordinate dimethylallyl diphosphate: Ser221, Asn223, and Ser264. The isopentenyl diphosphate site is built by Ser221, Asn223, and Ser264.

Belongs to the IspH family. The cofactor is [4Fe-4S] cluster.

The enzyme catalyses isopentenyl diphosphate + 2 oxidized [2Fe-2S]-[ferredoxin] + H2O = (2E)-4-hydroxy-3-methylbut-2-enyl diphosphate + 2 reduced [2Fe-2S]-[ferredoxin] + 2 H(+). It catalyses the reaction dimethylallyl diphosphate + 2 oxidized [2Fe-2S]-[ferredoxin] + H2O = (2E)-4-hydroxy-3-methylbut-2-enyl diphosphate + 2 reduced [2Fe-2S]-[ferredoxin] + 2 H(+). The protein operates within isoprenoid biosynthesis; dimethylallyl diphosphate biosynthesis; dimethylallyl diphosphate from (2E)-4-hydroxy-3-methylbutenyl diphosphate: step 1/1. It functions in the pathway isoprenoid biosynthesis; isopentenyl diphosphate biosynthesis via DXP pathway; isopentenyl diphosphate from 1-deoxy-D-xylulose 5-phosphate: step 6/6. In terms of biological role, catalyzes the conversion of 1-hydroxy-2-methyl-2-(E)-butenyl 4-diphosphate (HMBPP) into a mixture of isopentenyl diphosphate (IPP) and dimethylallyl diphosphate (DMAPP). Acts in the terminal step of the DOXP/MEP pathway for isoprenoid precursor biosynthesis. In Dehalococcoides mccartyi (strain ATCC BAA-2100 / JCM 16839 / KCTC 5957 / BAV1), this protein is 4-hydroxy-3-methylbut-2-enyl diphosphate reductase.